A 497-amino-acid chain; its full sequence is Cysteine desulfurase, mitochondrial (497 aa).

Residues 1–33 (MLKSTATRSITRLSQVYNVPAATYRACLVSRRF) constitute a mitochondrion transit peptide. Pyridoxal 5'-phosphate contacts are provided by residues 168 to 169 (AT), Asn-248, Gln-276, and 296 to 298 (SSH). The residue at position 299 (Lys-299) is an N6-(pyridoxal phosphate)lysine. Thr-336 is a pyridoxal 5'-phosphate binding site. The active-site Cysteine persulfide intermediate is the Cys-421. [2Fe-2S] cluster is bound at residue Cys-421.

The protein belongs to the class-V pyridoxal-phosphate-dependent aminotransferase family. NifS/IscS subfamily. It depends on pyridoxal 5'-phosphate as a cofactor.

The protein localises to the mitochondrion. The enzyme catalyses (sulfur carrier)-H + L-cysteine = (sulfur carrier)-SH + L-alanine. In terms of biological role, catalyzes the removal of elemental sulfur from cysteine to produce alanine. It supplies the inorganic sulfur for iron-sulfur (Fe-S) clusters. Plays a role in both tRNA-processing and mitochondrial metabolism. Involved in the 2-thio-modification of both 5-carboxymethylaminomethyl-2-thiouridine in mitochondrial tRNAs and 5-methoxycarbonylmethyl-2-thiouridine (mcm5s2U) in cytoplasmic tRNAs. The protein is Cysteine desulfurase, mitochondrial of Saccharomyces cerevisiae (strain ATCC 204508 / S288c) (Baker's yeast).